A 597-amino-acid chain; its full sequence is Arginine--tRNA ligase (597 aa).

A compositionally biased stretch (low complexity) spans 23–32 (QAAAARQASQ). The tract at residues 23 to 43 (QAAAARQASQPLDPQLAPASK) is disordered. Positions 137 to 147 (PNIAKEMHVGH) match the 'HIGH' region motif.

This sequence belongs to the class-I aminoacyl-tRNA synthetase family. In terms of assembly, monomer.

The protein localises to the cytoplasm. The enzyme catalyses tRNA(Arg) + L-arginine + ATP = L-arginyl-tRNA(Arg) + AMP + diphosphate. The chain is Arginine--tRNA ligase from Synechococcus sp. (strain WH7803).